Consider the following 224-residue polypeptide: uncharacterized protein (224 aa).

This is an uncharacterized protein from Listeria monocytogenes serovar 1/2a (strain ATCC BAA-679 / EGD-e).